The chain runs to 209 residues: Pyrrolidone-carboxylate peptidase (209 aa).

Residues E79, C142, and H164 contribute to the active site.

It belongs to the peptidase C15 family. In terms of assembly, homotetramer.

It localises to the cytoplasm. The enzyme catalyses Release of an N-terminal pyroglutamyl group from a polypeptide, the second amino acid generally not being Pro.. Removes 5-oxoproline from various penultimate amino acid residues except L-proline. This Saccharolobus islandicus (strain L.S.2.15 / Lassen #1) (Sulfolobus islandicus) protein is Pyrrolidone-carboxylate peptidase.